The sequence spans 365 residues: Zinc transporter 7 (365 aa).

Residues 1–26 (MAYSKACYKLTTITILLLSFTLPSLA) form the signal peptide. The Extracellular segment spans residues 27-56 (GNAENADVSECKAESGDLSCHNNKEAQKLK). The helical transmembrane segment at 57–77 (IIAIPSILVASMIGVSLPLFS) threads the bilayer. Residues 78 to 90 (RSIPALGPDREMS) lie on the Cytoplasmic side of the membrane. A helical membrane pass occupies residues 91–111 (VIVKTLASGVILATGFMHVLP). Residues 112-129 (DSFDDLTSKCLPEDPWQK) are Extracellular-facing. A helical transmembrane segment spans residues 130-150 (FPFATFITMISALLVLMIESF). The Cytoplasmic segment spans residues 151 to 210 (AMCAYARRTSKREGEVVPLENGSNSVDTQNDIQTLENGSSYVEKQEKVNEDKTSELLRNK). A helical membrane pass occupies residues 211–231 (VIAQILELGIVVHSVVIGLAM). Residues 232–242 (GASDNKCTVQS) lie on the Extracellular side of the membrane. The helical transmembrane segment at 243–263 (LIAALCFHQLFEGMGLGGSIL) threads the bilayer. Topologically, residues 264 to 272 (QAQFKSKTN) are cytoplasmic. A helical transmembrane segment spans residues 273–293 (WTMVFFFSVTTPFGIVLGMAI). At 294–304 (QKIYDETSPTA) the chain is on the extracellular side. Residues 305–325 (LIVVGVLNACSAGLLIYMALV) form a helical membrane-spanning segment. The Cytoplasmic segment spans residues 326–344 (NLLAHEFFGPKIQGNIKLH). A helical transmembrane segment spans residues 345 to 365 (VLGYVATFTGAAGMSLMAKWA).

This sequence belongs to the ZIP transporter (TC 2.A.5) family.

Its subcellular location is the cell membrane. Its function is as follows. Probably mediates zinc uptake from the rhizosphere. The chain is Zinc transporter 7 (ZIP7) from Arabidopsis thaliana (Mouse-ear cress).